A 134-amino-acid polypeptide reads, in one-letter code: Profilin-1 (134 aa).

Cys13 and Cys118 are disulfide-bonded. Residues 84–100 (AVVRGKKGSGGITIKKT) carry the Involved in PIP2 interaction motif. Thr114 carries the phosphothreonine modification.

Belongs to the profilin family. Occurs in many kinds of cells as a complex with monomeric actin in a 1:1 ratio. Phosphorylated by MAP kinases.

It localises to the cytoplasm. Its subcellular location is the cytoskeleton. Binds to actin and affects the structure of the cytoskeleton. At high concentrations, profilin prevents the polymerization of actin, whereas it enhances it at low concentrations. This is Profilin-1 from Olea europaea (Common olive).